We begin with the raw amino-acid sequence, 159 residues long: Serine-protein kinase RsbW (159 aa).

Belongs to the anti-sigma-factor family.

The enzyme catalyses L-seryl-[protein] + ATP = O-phospho-L-seryl-[protein] + ADP + H(+). It carries out the reaction L-threonyl-[protein] + ATP = O-phospho-L-threonyl-[protein] + ADP + H(+). Negative regulator of sigma-B activity. Phosphorylates and inactivates its specific antagonist protein, RsbV. Upon phosphorylation of RsbV, RsbW is released and binds to sigma-B, thereby blocking its ability to form an RNA polymerase holoenzyme (E-sigma-B). The polypeptide is Serine-protein kinase RsbW (Staphylococcus aureus (strain MRSA252)).